The primary structure comprises 487 residues: GTPase Der (487 aa).

EngA-type G domains follow at residues 3–166 and 193–366; these read PVIA…PRDA and IKIA…KSAV. GTP-binding positions include 9 to 16, 56 to 60, 118 to 121, 199 to 206, 246 to 250, and 311 to 314; these read GRPNVGKS, DTGGI, NKID, DTAGV, and NKWD. The region spanning 367 to 451 is the KH-like domain; the sequence is TRWPTSRLTQ…PIRIEYKGGE (85 aa). Residues 448 to 461 show a composition bias toward basic and acidic residues; that stretch reads KGGENPYEGKKNTL. Positions 448 to 487 are disordered; the sequence is KGGENPYEGKKNTLTDRQVNKKRRLMSHHKKAEKKRRDKR. The segment covering 467–487 has biased composition (basic residues); that stretch reads NKKRRLMSHHKKAEKKRRDKR.

It belongs to the TRAFAC class TrmE-Era-EngA-EngB-Septin-like GTPase superfamily. EngA (Der) GTPase family. Associates with the 50S ribosomal subunit.

In terms of biological role, GTPase that plays an essential role in the late steps of ribosome biogenesis. The polypeptide is GTPase Der (Pseudomonas putida (strain W619)).